Consider the following 457-residue polypeptide: Multidrug resistance protein MdtK (457 aa).

The next 12 membrane-spanning stretches (helical) occupy residues 11 to 31 (LLAL…MGFV), 53 to 73 (IWLP…PVIA), 93 to 113 (WLAG…GYII), 127 to 147 (AVGY…FQVA), 160 to 180 (GMVM…IFIY), 189 to 209 (GGVG…LAMV), 243 to 263 (LPIA…ALLV), 276 to 296 (IALN…AAVT), 314 to 334 (AART…IFTV), 350 to 370 (VVTL…SDSI), 387 to 407 (IFYI…YILA), and 418 to 438 (PAGF…MMML).

It belongs to the multi antimicrobial extrusion (MATE) (TC 2.A.66.1) family. MdtK subfamily.

The protein resides in the cell inner membrane. In terms of biological role, multidrug efflux pump that functions probably as a Na(+)/drug antiporter. This is Multidrug resistance protein MdtK from Escherichia coli O127:H6 (strain E2348/69 / EPEC).